The sequence spans 472 residues: Argininosuccinate lyase (472 aa).

It belongs to the lyase 1 family. Argininosuccinate lyase subfamily.

The protein localises to the cytoplasm. The catalysed reaction is 2-(N(omega)-L-arginino)succinate = fumarate + L-arginine. Its pathway is amino-acid biosynthesis; L-arginine biosynthesis; L-arginine from L-ornithine and carbamoyl phosphate: step 3/3. This is Argininosuccinate lyase from Syntrophus aciditrophicus (strain SB).